A 263-amino-acid polypeptide reads, in one-letter code: Kallikrein 1-related peptidase b27 (263 aa).

A signal peptide spans 1 to 17; that stretch reads MRFLILFLALSLGGIDA. Positions 18-24 are cleaved as a propeptide — activation peptide; sequence APPVQSR. The Peptidase S1 domain maps to 25–260; that stretch reads IIGGFKCKKN…FTSWIKDTMA (236 aa). Disulfide bonds link C31–C175, C50–C66, C154–C221, C186–C200, and C211–C236. The active-site Charge relay system is H65. 2 N-linked (GlcNAc...) asparagine glycosylation sites follow: N69 and N105. The active-site Charge relay system is the D122. S215 functions as the Charge relay system in the catalytic mechanism.

It belongs to the peptidase S1 family. Kallikrein subfamily. In terms of tissue distribution, expressed in testis and submaxillary gland. Not expressed in heart, brain, spleen, lung, liver, muscle, kidney and ovary. In the testis, expression localized specifically to Leydig cells in the interstitial tissues.

Strongly inhibited by protease inhibitors diisopropyl fluorophosphate, phenylmethanesulfonyl fluoride and SBTI. Serine protease with chymotrypsin-like cleavage specificity. Shows activity towards casein, gelatin, IGFBP3 and fibronectin but not towards laminin or collagens I and IV. Does not hydrolyze kininogin to release Lys-bradykinin. The protein is Kallikrein 1-related peptidase b27 (Klk1b27) of Mus musculus (Mouse).